A 323-amino-acid chain; its full sequence is Annexin A5 (323 aa).

Annexin repeat units follow at residues 17 to 88, 89 to 160, 172 to 244, and 248 to 319; these read FNDK…ALMV, PAHL…SLVQ, GQVE…AVVK, and SIQG…LLCG.

This sequence belongs to the annexin family.

Calcium/phospholipid-binding protein which promotes membrane fusion and is involved in exocytosis. This Cynops pyrrhogaster (Japanese fire-bellied newt) protein is Annexin A5.